Consider the following 198-residue polypeptide: Recombination protein RecR (198 aa).

Residues 58-73 form a C4-type zinc finger; the sequence is CSICGNYTDSDPCAIC. Residues 81–175 enclose the Toprim domain; sequence SIICVIEQPK…KVTRIAHGVP (95 aa).

Belongs to the RecR family.

In terms of biological role, may play a role in DNA repair. It seems to be involved in an RecBC-independent recombinational process of DNA repair. It may act with RecF and RecO. The sequence is that of Recombination protein RecR from Clostridium novyi (strain NT).